Consider the following 274-residue polypeptide: Kit ligand (274 aa).

Residues 1-25 (MKKTQTWIITCIYLQLLLFNPLVKT) form the signal peptide. The Extracellular segment spans residues 26–215 (KGICENRVTD…SNFTGDSNLQ (190 aa)). 2 cysteine pairs are disulfide-bonded: cysteine 29–cysteine 114 and cysteine 68–cysteine 164. N-linked (GlcNAc...) asparagine glycans are attached at residues asparagine 90, asparagine 97, asparagine 145, asparagine 196, and asparagine 207. The helical transmembrane segment at 216 to 238 (WAAMALPAFFSLVIGFAFGALYW) threads the bilayer. Residues 239–274 (KKKQPNLTRAVENIQINEEDNEISMLQEKEREFQEV) are Cytoplasmic-facing.

Belongs to the SCF family. In terms of assembly, homodimer, non-covalently linked. A soluble form is produced by proteolytic processing of the extracellular domain.

It is found in the cytoplasm. The protein resides in the cytoskeleton. It localises to the cell membrane. The protein localises to the cell projection. Its subcellular location is the lamellipodium. It is found in the filopodium. The protein resides in the secreted. In terms of biological role, stimulates the proliferation of mast cells. Able to augment the proliferation of both myeloid and lymphoid hematopoietic progenitors in bone marrow culture. Also mediates cell-cell adhesion. Acts synergistically with other cytokines, probably interleukins. In Equus caballus (Horse), this protein is Kit ligand (KITLG).